Here is a 360-residue protein sequence, read N- to C-terminus: Photosystem II protein D1 (360 aa).

Transmembrane regions (helical) follow at residues 29–46 (YIGW…TATC), 118–133 (HFLI…EWEL), and 142–156 (WICV…AATA). His118 lines the chlorophyll a pocket. Tyr126 contributes to the pheophytin a binding site. Positions 170 and 189 each coordinate [CaMn4O5] cluster. The helical transmembrane segment at 197 to 218 (FHMAGVAGVFGGALFSAMHGSL) threads the bilayer. Chlorophyll a is bound at residue His198. A quinone-binding positions include His215 and 264–265 (SF). His215 is a binding site for Fe cation. His272 serves as a coordination point for Fe cation. The chain crosses the membrane as a helical span at residues 274–288 (FLGAWPVVGIWLTAI). Residues His332, Glu333, Asp342, and Ala344 each coordinate [CaMn4O5] cluster. The propeptide occupies 345 to 360 (SNSVVPVALTAPSVEA).

Belongs to the reaction center PufL/M/PsbA/D family. PSII is composed of 1 copy each of membrane proteins PsbA, PsbB, PsbC, PsbD, PsbE, PsbF, PsbH, PsbI, PsbJ, PsbK, PsbL, PsbM, PsbT, PsbX, PsbY, PsbZ, Psb30/Ycf12, at least 3 peripheral proteins of the oxygen-evolving complex and a large number of cofactors. It forms dimeric complexes. It depends on The D1/D2 heterodimer binds P680, chlorophylls that are the primary electron donor of PSII, and subsequent electron acceptors. It shares a non-heme iron and each subunit binds pheophytin, quinone, additional chlorophylls, carotenoids and lipids. D1 provides most of the ligands for the Mn4-Ca-O5 cluster of the oxygen-evolving complex (OEC). There is also a Cl(-1) ion associated with D1 and D2, which is required for oxygen evolution. The PSII complex binds additional chlorophylls, carotenoids and specific lipids. as a cofactor. In terms of processing, tyr-161 forms a radical intermediate that is referred to as redox-active TyrZ, YZ or Y-Z. Post-translationally, C-terminally processed by CTPA; processing is essential to allow assembly of the oxygen-evolving complex and thus photosynthetic growth.

The protein resides in the plastid. It is found in the chloroplast thylakoid membrane. The enzyme catalyses 2 a plastoquinone + 4 hnu + 2 H2O = 2 a plastoquinol + O2. Functionally, photosystem II (PSII) is a light-driven water:plastoquinone oxidoreductase that uses light energy to abstract electrons from H(2)O, generating O(2) and a proton gradient subsequently used for ATP formation. It consists of a core antenna complex that captures photons, and an electron transfer chain that converts photonic excitation into a charge separation. The D1/D2 (PsbA/PsbD) reaction center heterodimer binds P680, the primary electron donor of PSII as well as several subsequent electron acceptors. In Cyanidioschyzon merolae (strain NIES-3377 / 10D) (Unicellular red alga), this protein is Photosystem II protein D1.